We begin with the raw amino-acid sequence, 517 residues long: GMP synthase [glutamine-hydrolyzing] (517 aa).

The Glutamine amidotransferase type-1 domain occupies 11–202 (KIIVLDYGSQ…AFGVCGAQDN (192 aa)). The active-site Nucleophile is the cysteine 88. Catalysis depends on residues histidine 176 and glutamate 178. The GMPS ATP-PPase domain maps to 203-392 (WTMNDFIDMQ…LGMPYELVWR (190 aa)). ATP is bound at residue 230–236 (SGGVDSS).

Homodimer.

It catalyses the reaction XMP + L-glutamine + ATP + H2O = GMP + L-glutamate + AMP + diphosphate + 2 H(+). Its pathway is purine metabolism; GMP biosynthesis; GMP from XMP (L-Gln route): step 1/1. Catalyzes the synthesis of GMP from XMP. The sequence is that of GMP synthase [glutamine-hydrolyzing] from Latilactobacillus sakei subsp. sakei (strain 23K) (Lactobacillus sakei subsp. sakei).